Here is a 1382-residue protein sequence, read N- to C-terminus: MKASAVLAPGILALLFTLVQGSDGECHEALAKSEMNVNMKYQLPNFTAETPIQNVVLHDHHIYLGATNYIYVLNDRDLQKVAEYKTGPVLEHPDCFPCQNCSDIANFSGGIWKDNINRALLVDTYYDDQLISCGSVNRGACQRHVLPPDNPADIRSEVHCMFSPQADEEPGQCPDCVVSALGAKVLLSVKDRFINFFVGNTLNSSYFPDHPLHSISVRRLKETQDGFKFLTDQSYIDVLPEFRDSYPIKYVHAFESNHFIYFLTVQRETLDAQTFHTRIIRFCSVDSGLHSYMEMPLECILTEKRRKRSTREEVFNILQAAYVSKPGAQLAKQIGASLNDDILFGVFAQSKPDSAEPMNRSAVCAFPIKYVNDFFNKIVNKNNVRCLQHFYGPHHEHCFNRTLLRNSSGCEVRKDEYRTEFTTALQRVDLFMGQFNQVLLTSISTFIKGDLTIANLGTSEGRFMQVVVSRSGSSTPHVNFQLDSHPVSPEVIVEHPLNQNGYTLVVTGKRITKIPLNGLGCGHFQSCSQCLSAPSFVQCGWCHDKCVRSEECPTGTWTQEICLPAIHKVFPTSAPLEGGTMLTICGWDFGFRRNNKFDLKKTKVLLGNESCTLTLSESTTNMLKCTVGPAMSEHFNMSIVISHGRGMTQYSTFSYVDPVITSISPSYGPKAGGTLLTLTGKYLNSGNSRHISIGGKTCTLKSVSNSILECYTPAQIISTEFPVKLKIDLANRETSSFSYQEDPVVYEIHPTKSFVSGGSTITGVGKNLNSVSVPRMVINVQEAGRNFTVACQHRSNSEIICCTTPSLQQLNLQLPLKTKAFFMLDGILSKYFDLIYVHNPVFKPFEKPVMISMGNENVLEIKGNDIDPEAVKGEVLKVGNKSCENIHSHSEAVLCTVPNDLLKLNSELNIEWKQAVSSTVLGKVIVQPDQNFTGLIVGVVSISIILLLLLGLFLWMKKRKQIKDLGSELVRYDARVHTPHLDRLVSARSVSPTTEMVSNESVDYRATFPEDQFPNSSQNGSCRQVQYPLTDLSPILTSGDSDISSPLLQNTVHIDLSALNPELVQAVQHVVIGPSSLIVHFNEVIGRGHFGCVYHGTLLDNDGKKIHCAVKSLNRITDIGEVSQFLTEGIIMKDFSHPNVLSLLGICLRSEGSPLVVLPYMKHGDLRNFIRNETHNPTVKDLIGFGLQVAKGMKYLASKKFVHRDLAARNCMLDEKFTVKVADFGLARDMYDKEYYSVHNKTGAKLPVKWMALESLQTQKFTTKSDVWSFGVLLWELMTRGAPPYPDVNTFDITVYLLQGRRLLQPEYCPDPLYEVMLKCWHPKAEMRPSFSELVSRISAIFSTFIGEHYVHVNATYVNVKCVAPYPSLLSSQDNINGEVDT.

The first 24 residues, 1–24 (MKASAVLAPGILALLFTLVQGSDG), serve as a signal peptide directing secretion. Over 25–935 (ECHEALAKSE…VQPDQNFTGL (911 aa)) the chain is Extracellular. A Sema domain is found at 27 to 516 (HEALAKSEMN…TGKRITKIPL (490 aa)). N-linked (GlcNAc...) asparagine glycans are attached at residues asparagine 45, asparagine 100, and asparagine 106. Cystine bridges form between cysteine 95-cysteine 101, cysteine 98-cysteine 160, cysteine 133-cysteine 141, and cysteine 173-cysteine 176. Asparagine 203 and asparagine 359 each carry an N-linked (GlcNAc...) asparagine glycan. 2 disulfide bridges follow: cysteine 299–cysteine 364 and cysteine 386–cysteine 398. Residues asparagine 400 and asparagine 406 are each glycosylated (N-linked (GlcNAc...) asparagine). Disulfide bonds link cysteine 521/cysteine 539, cysteine 527/cysteine 562, cysteine 530/cysteine 546, and cysteine 542/cysteine 552. IPT/TIG domains are found at residues 564–656 (PAIH…FSYV), 658–740 (PVIT…FSYQ), and 743–837 (PVVY…LIYV). O-linked (Man) threonine glycosylation is present at threonine 583. 2 N-linked (GlcNAc...) asparagine glycosylation sites follow: asparagine 608 and asparagine 636. Threonine 677 and threonine 762 each carry an O-linked (Man) threonine glycan. N-linked (GlcNAc...) asparagine glycans are attached at residues asparagine 786, asparagine 880, and asparagine 931. A helical transmembrane segment spans residues 936-956 (IVGVVSISIILLLLLGLFLWM). Over 957–1382 (KKRKQIKDLG…QDNINGEVDT (426 aa)) the chain is Cytoplasmic. Position 967 is a phosphoserine (serine 967). Threonine 978 bears the Phosphothreonine mark. A phosphoserine mark is found at serine 991, serine 998, and serine 1001. Tyrosine 1004 is subject to Phosphotyrosine. The region spanning 1079 to 1346 (VHFNEVIGRG…RISAIFSTFI (268 aa)) is the Protein kinase domain. ATP contacts are provided by residues 1085–1093 (IGRGHFGCV) and lysine 1111. Aspartate 1205 functions as the Proton acceptor in the catalytic mechanism. The tract at residues 1213-1382 (LDEKFTVKVA…QDNINGEVDT (170 aa)) is interaction with RANBP9. Tyrosine 1231 is subject to Phosphotyrosine. Phosphotyrosine; by autocatalysis occurs at positions 1235 and 1236. Threonine 1290 bears the Phosphothreonine mark. An interaction with MUC20 region spans residues 1321 to 1360 (WHPKAEMRPSFSELVSRISAIFSTFIGEHYVHVNATYVNV). Phosphotyrosine; by autocatalysis occurs at positions 1350 and 1357. The residue at position 1366 (tyrosine 1366) is a Phosphotyrosine.

The protein belongs to the protein kinase superfamily. Tyr protein kinase family. As to quaternary structure, heterodimer made of an alpha chain (50 kDa) and a beta chain (145 kDa) which are disulfide linked. Binds PLXNB1. Interacts when phosphorylated with downstream effectors including STAT3, PIK3R1, SRC, PCLG1, GRB2 and GAB1. Interacts with SPSB1, SPSB2 and SPSB4. Interacts with INPP5D/SHIP1. When phosphorylated at Tyr-1357, interacts with INPPL1/SHIP2. Interacts with RANBP9 and RANBP10, as well as SPSB1, SPSB2, SPSB3 and SPSB4. SPSB1 binding occurs in the presence and in the absence of HGF, however HGF treatment has a positive effect on this interaction. Interacts with MUC20; prevents interaction with GRB2 and suppresses hepatocyte growth factor-induced cell proliferation. Interacts with GRB10. Interacts with PTPN1 and PTPN2. Interacts with HSP90AA1 and HSP90AB1; the interaction suppresses MET kinase activity. Interacts with tensin TNS3. Interacts (when phosphorylated) with tensin TNS4 (via SH2 domain); the interaction increases MET protein stability by inhibiting MET endocytosis and subsequent lysosomal degradation. In terms of processing, autophosphorylated in response to ligand binding on Tyr-1235 and Tyr-1236 in the kinase domain leading to further phosphorylation of Tyr-1350 and Tyr-1357 in the C-terminal multifunctional docking site. Dephosphorylated by PTPRJ at Tyr-1350 and Tyr-1366. Dephosphorylated by PTPN1 and PTPN2. Post-translationally, ubiquitinated. Ubiquitination by CBL regulates the receptor stability and activity through proteasomal degradation. O-mannosylation of IPT/TIG domains by TMEM260 is required for protein maturation. O-mannosylated residues are composed of single mannose glycans that are not elongated or modified.

It localises to the membrane. It carries out the reaction L-tyrosyl-[protein] + ATP = O-phospho-L-tyrosyl-[protein] + ADP + H(+). In its inactive state, the C-terminal tail interacts with the catalytic domain and inhibits the kinase activity. Upon ligand binding, the C-terminal tail is displaced and becomes phosphorylated, thus increasing the kinase activity. Functionally, receptor tyrosine kinase that transduces signals from the extracellular matrix into the cytoplasm by binding to hepatocyte growth factor/HGF ligand. Regulates many physiological processes including proliferation, scattering, morphogenesis and survival. Ligand binding at the cell surface induces autophosphorylation of MET on its intracellular domain that provides docking sites for downstream signaling molecules. Following activation by ligand, interacts with the PI3-kinase subunit PIK3R1, PLCG1, SRC, GRB2, STAT3 or the adapter GAB1. Recruitment of these downstream effectors by MET leads to the activation of several signaling cascades including the RAS-ERK, PI3 kinase-AKT, or PLCgamma-PKC. The RAS-ERK activation is associated with the morphogenetic effects while PI3K/AKT coordinates prosurvival effects. During embryonic development, MET signaling plays a role in gastrulation, development and migration of muscles and neuronal precursors, angiogenesis and kidney formation. In adults, participates in wound healing as well as organ regeneration and tissue remodeling. Also promotes differentiation and proliferation of hematopoietic cells. This is Hepatocyte growth factor receptor (MET) from Microcebus murinus (Gray mouse lemur).